Reading from the N-terminus, the 230-residue chain is V-type proton ATPase subunit E1 (230 aa).

An N-acetylmethionine modification is found at Met1. Residues 8–67 (RQIQQMVRFIRQEAEEKANEISVSAEEEFNIEKLQLVEAEKKKIRQDYEKKEKQADVRKK) are a coiled coil. Ser178 carries the post-translational modification Phosphoserine.

This sequence belongs to the V-ATPase E subunit family. V-ATPase is a heteromultimeric enzyme composed of a peripheral catalytic V1 complex (components A to H) attached to an integral membrane V0 proton pore complex (components: a, c, c'', d and e).

Its subcellular location is the vacuole membrane. Functionally, subunit of the peripheral V1 complex of vacuolar ATPase essential for assembly or catalytic function. V-ATPase is responsible for acidifying a variety of intracellular compartments in eukaryotic cells. Required for Golgi organization and vacuole function in embryogenesis. This chain is V-type proton ATPase subunit E1 (VHA-E1), found in Arabidopsis thaliana (Mouse-ear cress).